The primary structure comprises 1092 residues: Leukemia inhibitory factor receptor (1092 aa).

The signal sequence occupies residues 1–43 (MAAYSWWRQPSWMVDNKRSRMTPNLPWLLSALTLLHLTMHANG). Over 44–828 (LKRGVQDLKC…SMFVVTKENS (785 aa)) the chain is Extracellular. In terms of domain architecture, Fibronectin type-III 1 spans 45–126 (KRGVQDLKCT…QSKFTLNEKD (82 aa)). 2 disulfide bridges follow: C53–C63 and C80–C88. 4 N-linked (GlcNAc...) asparagine glycosylation sites follow: N164, N199, N238, and N261. 2 cysteine pairs are disulfide-bonded: C208–C265 and C336–C346. 5 Fibronectin type-III domains span residues 330–429 (VPQK…VAPH), 430–529 (DPTS…TEAT), 533–624 (GPDT…IPND), 622–714 (PNDD…IGYV), and 719–828 (PIVA…KENS). 6 N-linked (GlcNAc...) asparagine glycosylation sites follow: N385, N402, N421, N440, N453, and N476. An intrachain disulfide couples C461 to C506. The WSXWS motif motif lies at 514-518 (WSRWS). Residues N567, N647, N658, N675, N724, and N782 are each glycosylated (N-linked (GlcNAc...) asparagine). Residues 829 to 853 (VGLIIAILIPVAVAVIVGVVTSILC) traverse the membrane as a helical segment. Residues 854–1092 (YRKREWIKET…TNFFQNKPND (239 aa)) lie on the Cytoplasmic side of the membrane. The Box 1 motif signature appears at 864–872 (FYPDIPNPE). S922 and S1039 each carry phosphoserine. The disordered stretch occupies residues 1009–1092 (EDTAAEDEEG…TNFFQNKPND (84 aa)). 2 stretches are compositionally biased toward polar residues: residues 1027–1062 (ANVN…NSRQ) and 1081–1092 (SFTNFFQNKPND).

The protein belongs to the type I cytokine receptor family. Type 2 subfamily. As to quaternary structure, heterodimer composed of LIFR and IL6ST. The heterodimer formed by LIFR and IL6ST interacts with the complex formed by CNTF and CNTFR. In terms of tissue distribution, placenta, liver, kidney, heart, lung, brain, and embryos. The liver may be the primary site of synthesis of the secreted form.

It is found in the cell membrane. The protein resides in the secreted. In terms of biological role, signal-transducing molecule. May have a common pathway with IL6ST. The soluble form inhibits the biological activity of LIF by blocking its binding to receptors on target cells. This Mus musculus (Mouse) protein is Leukemia inhibitory factor receptor (Lifr).